The chain runs to 60 residues: Large ribosomal subunit protein bL32 (60 aa).

Positions 1 to 60 are disordered; it reads MAVQQNKKSRSARDMRRSHDALSENALSVEKTTGEVHLRHHVSPEGVYRGRKVVDKGADE. A compositionally biased stretch (basic and acidic residues) spans 11-22; it reads SARDMRRSHDAL.

Belongs to the bacterial ribosomal protein bL32 family.

This is Large ribosomal subunit protein bL32 from Pseudomonas putida (strain ATCC 700007 / DSM 6899 / JCM 31910 / BCRC 17059 / LMG 24140 / F1).